Here is a 287-residue protein sequence, read N- to C-terminus: Nucleotide-binding protein HD_0584 (287 aa).

8-15 (GRSGSGKS) contacts ATP. GTP is bound at residue 56-59 (DIRN).

This sequence belongs to the RapZ-like family.

Functionally, displays ATPase and GTPase activities. The protein is Nucleotide-binding protein HD_0584 of Haemophilus ducreyi (strain 35000HP / ATCC 700724).